Reading from the N-terminus, the 1041-residue chain is Isoleucine--tRNA ligase (1041 aa).

The 'HIGH' region motif lies at 53-63 (PFANGLPHYGH). The short motif at 619–623 (KMSKS) is the 'KMSKS' region element. ATP is bound at residue Lys-622.

The protein belongs to the class-I aminoacyl-tRNA synthetase family. IleS type 2 subfamily. As to quaternary structure, monomer. The cofactor is Zn(2+).

Its subcellular location is the cytoplasm. The catalysed reaction is tRNA(Ile) + L-isoleucine + ATP = L-isoleucyl-tRNA(Ile) + AMP + diphosphate. Functionally, catalyzes the attachment of isoleucine to tRNA(Ile). As IleRS can inadvertently accommodate and process structurally similar amino acids such as valine, to avoid such errors it has two additional distinct tRNA(Ile)-dependent editing activities. One activity is designated as 'pretransfer' editing and involves the hydrolysis of activated Val-AMP. The other activity is designated 'posttransfer' editing and involves deacylation of mischarged Val-tRNA(Ile). The protein is Isoleucine--tRNA ligase of Mycobacterium bovis (strain ATCC BAA-935 / AF2122/97).